The primary structure comprises 428 residues: Adenylosuccinate synthetase (428 aa).

GTP is bound by residues 12 to 18 (GDEGKGK) and 40 to 42 (GHT). Aspartate 13 serves as the catalytic Proton acceptor. Positions 13 and 40 each coordinate Mg(2+). IMP-binding positions include 13–16 (DEGK), 38–41 (NAGH), threonine 128, arginine 142, glutamine 223, threonine 238, and arginine 302. The active-site Proton donor is histidine 41. 298 to 304 (VTTGRPR) lines the substrate pocket. GTP is bound by residues arginine 304, 330–332 (KLD), and 412–414 (GTG).

It belongs to the adenylosuccinate synthetase family. Homodimer. It depends on Mg(2+) as a cofactor.

The protein resides in the cytoplasm. The enzyme catalyses IMP + L-aspartate + GTP = N(6)-(1,2-dicarboxyethyl)-AMP + GDP + phosphate + 2 H(+). It functions in the pathway purine metabolism; AMP biosynthesis via de novo pathway; AMP from IMP: step 1/2. Plays an important role in the de novo pathway of purine nucleotide biosynthesis. Catalyzes the first committed step in the biosynthesis of AMP from IMP. The protein is Adenylosuccinate synthetase of Bifidobacterium animalis subsp. lactis (strain AD011).